A 119-amino-acid polypeptide reads, in one-letter code: Large ribosomal subunit protein uL18 (119 aa).

Belongs to the universal ribosomal protein uL18 family. As to quaternary structure, part of the 50S ribosomal subunit; part of the 5S rRNA/L5/L18/L25 subcomplex. Contacts the 5S and 23S rRNAs.

In terms of biological role, this is one of the proteins that bind and probably mediate the attachment of the 5S RNA into the large ribosomal subunit, where it forms part of the central protuberance. The sequence is that of Large ribosomal subunit protein uL18 from Cupriavidus necator (strain ATCC 17699 / DSM 428 / KCTC 22496 / NCIMB 10442 / H16 / Stanier 337) (Ralstonia eutropha).